The chain runs to 199 residues: Imidazoleglycerol-phosphate dehydratase (199 aa).

Belongs to the imidazoleglycerol-phosphate dehydratase family.

It localises to the cytoplasm. The catalysed reaction is D-erythro-1-(imidazol-4-yl)glycerol 3-phosphate = 3-(imidazol-4-yl)-2-oxopropyl phosphate + H2O. The protein operates within amino-acid biosynthesis; L-histidine biosynthesis; L-histidine from 5-phospho-alpha-D-ribose 1-diphosphate: step 6/9. In Rhodospirillum rubrum (strain ATCC 11170 / ATH 1.1.1 / DSM 467 / LMG 4362 / NCIMB 8255 / S1), this protein is Imidazoleglycerol-phosphate dehydratase.